The following is a 114-amino-acid chain: Large ribosomal subunit protein uL18 (114 aa).

Belongs to the universal ribosomal protein uL18 family. Part of the 50S ribosomal subunit; part of the 5S rRNA/L5/L18/L25 subcomplex. Contacts the 5S and 23S rRNAs.

Its function is as follows. This is one of the proteins that bind and probably mediate the attachment of the 5S RNA into the large ribosomal subunit, where it forms part of the central protuberance. This chain is Large ribosomal subunit protein uL18, found in Porphyromonas gingivalis (strain ATCC BAA-308 / W83).